We begin with the raw amino-acid sequence, 530 residues long: ATP-dependent RNA helicase DBP3 (530 aa).

Residues 1 to 20 (MSKDEIKDKKRKSEEYEVVD) are compositionally biased toward basic and acidic residues. Residues 1–77 (MSKDEIKDKK…VASVSTSSTV (77 aa)) form a disordered region. Positions 19–58 (VDKKKHKKDKKDKKEKKDKKEKKLKKDKKDKKDKKETKSE) form a coiled coil. The span at 21 to 50 (KKKHKKDKKDKKEKKDKKEKKLKKDKKDKK) shows a compositional bias: basic residues. Positions 67-77 (SVASVSTSSTV) are enriched in low complexity. The Q motif signature appears at 117–143 (LSFSHISLDSRIQAEISKFPKPTPIQA). The region spanning 146–322 (WPYLLAGKDV…STFMNSPIKV (177 aa)) is the Helicase ATP-binding domain. ATP is bound at residue 159-166 (AETGSGKT). A DEAD box motif is present at residues 269 to 272 (DEAD). Positions 351–500 (KLLELLKKYQ…PVPEELKKFG (150 aa)) constitute a Helicase C-terminal domain.

The protein belongs to the DEAD box helicase family. DDX5/DBP2 subfamily.

It is found in the nucleus. Its subcellular location is the nucleolus. The enzyme catalyses ATP + H2O = ADP + phosphate + H(+). Its function is as follows. ATP-dependent RNA helicase required for 60S ribosomal subunit synthesis. Involved in efficient pre-rRNA processing, predominantly at site A3, which is necessary for the normal formation of 25S and 5.8S rRNAs. The chain is ATP-dependent RNA helicase DBP3 (DBP3) from Vanderwaltozyma polyspora (strain ATCC 22028 / DSM 70294 / BCRC 21397 / CBS 2163 / NBRC 10782 / NRRL Y-8283 / UCD 57-17) (Kluyveromyces polysporus).